Here is a 412-residue protein sequence, read N- to C-terminus: Probable tRNA pseudouridine synthase D (412 aa).

Aspartate 97 acts as the Nucleophile in catalysis. The region spanning 167–370 (ALPNYYGYQR…YGGYRKVVLT (204 aa)) is the TRUD domain.

It belongs to the pseudouridine synthase TruD family.

The catalysed reaction is uridine(13) in tRNA = pseudouridine(13) in tRNA. Functionally, could be responsible for synthesis of pseudouridine from uracil-13 in transfer RNAs. This is Probable tRNA pseudouridine synthase D from Pyrobaculum islandicum (strain DSM 4184 / JCM 9189 / GEO3).